The sequence spans 726 residues: Myb-like protein Z (726 aa).

Disordered stretches follow at residues 15–109, 124–149, 161–239, and 272–303; these read DSND…SLSN, ASPS…YHPY, HYVS…TKQQ, and LIPS…NMRS. The span at 18–39 shows a compositional bias: low complexity; that stretch reads DNNNNNNNNNNSNNNNNNNNNN. Residues 45–80 show a composition bias toward polar residues; sequence SSATSSPTGQDSTIDRPNSPSSSIKFTYPSKNSIVT. Residues 81 to 108 show a composition bias toward low complexity; sequence SPSSLQLPSPSFSSSSSSSSSSSSSSLS. Polar residues predominate over residues 124–147; sequence ASPSKSSENSPTIHTSSLSPNSYH. The segment covering 165-177 has biased composition (low complexity); that stretch reads NNNNNNNNNNNNN. The segment covering 183-209 has biased composition (polar residues); it reads SSELYNTSPSISSKTTPNGSSTNNSPF. Positions 221–239 are enriched in low complexity; it reads NNNNNNNNDRNENNTTKQQ. In terms of domain architecture, Myb-like spans 329 to 388; the sequence is IPIATRKLWSQEECCRLLEMVFQRDPQSVTSKESELRWRSIASTLGRTVTSTRKKYMRLM. A compositionally biased stretch (low complexity) spans 516–651; the sequence is KQIQQQQKQK…NNNYRSSLSP (136 aa). Residues 516–726 are disordered; that stretch reads KQIQQQQKQK…NNNNYNNYHN (211 aa). Residues 661–675 are compositionally biased toward polar residues; sequence QSPQQKSNNENQQNF. Low complexity predominate over residues 709–726; that stretch reads NLNNNNNNNNNNYNNYHN.

The sequence is that of Myb-like protein Z (mybZ) from Dictyostelium discoideum (Social amoeba).